The primary structure comprises 427 residues: UPF0597 protein CPR_0790 (427 aa).

This sequence belongs to the UPF0597 family.

This is UPF0597 protein CPR_0790 from Clostridium perfringens (strain SM101 / Type A).